The primary structure comprises 363 residues: DNA replication and repair protein RecF (363 aa).

30 to 37 (GPNGSGKT) is an ATP binding site.

This sequence belongs to the RecF family.

It localises to the cytoplasm. Its function is as follows. The RecF protein is involved in DNA metabolism; it is required for DNA replication and normal SOS inducibility. RecF binds preferentially to single-stranded, linear DNA. It also seems to bind ATP. The sequence is that of DNA replication and repair protein RecF from Chlorobium phaeobacteroides (strain BS1).